A 493-amino-acid polypeptide reads, in one-letter code: Sorting nexin-4 (493 aa).

Residues 1 to 77 (MAVIDQDNFS…ILDCTVSDPH (77 aa)) are disordered. Positions 7-28 (DNFSNISWHSEQNAESAASTAQ) are enriched in polar residues. The segment covering 56 to 65 (MEHDELDHSG) has biased composition (basic and acidic residues). The PX domain occupies 68–190 (ILDCTVSDPH…AFLESPDWNA (123 aa)). 4 residues coordinate a 1,2-diacyl-sn-glycero-3-phospho-(1D-myo-inositol-3-phosphate): R111, T113, K137, and R156. Coiled coils occupy residues 248–292 (EIKE…QKLI), 338–363 (SGTL…EYLN), and 405–442 (EQAR…QVSR).

This sequence belongs to the sorting nexin family.

The protein resides in the cytoplasm. It localises to the membrane. The protein localises to the endosome membrane. Functionally, sorting nexin, involved in the separation or division of vacuoles throughout the entire life cycle of the cells. Involved in retrieval of late-Golgi SNAREs from post-Golgi endosomes to the trans-Golgi network, for cytoplasm to vacuole transport (Cvt), and autophagy of large cargos including mitophagy, pexophagy and glycophagy. The chain is Sorting nexin-4 (vsp-5) from Neurospora crassa (strain ATCC 24698 / 74-OR23-1A / CBS 708.71 / DSM 1257 / FGSC 987).